The following is a 320-amino-acid chain: Mas-related G-protein coupled receptor member D (320 aa).

Residues 1–33 (MNQTLNSSGTAELALNHSRGSVVHAACLVLSSL) are Extracellular-facing. Asparagine 2, asparagine 6, and asparagine 16 each carry an N-linked (GlcNAc...) asparagine glycan. A helical transmembrane segment spans residues 34–54 (AMFTCLCGMAGNSMVIWLLGF). The Cytoplasmic segment spans residues 55–62 (RMRRTPFS). The helical transmembrane segment at 63–83 (IYILNLAAADLLFVFCMAAML) threads the bilayer. Residues 84 to 112 (SLETQPLVSTTDKVHELMKRLKYFAYTVG) are Extracellular-facing. Residues 113–133 (LSLLTAISTQRCLSVLFPIWF) traverse the membrane as a helical segment. At 134-142 (KCHRPRHLS) the chain is on the cytoplasmic side. Residues 143-163 (AWVCALLWMLCLLTNGLTSCF) form a helical membrane-spanning segment. Residues 164-182 (CSKFLKFNKDQCFRVDMVQ) lie on the Extracellular side of the membrane. Residues 183–203 (AALIMGVLTPVMTLSSLTLFV) traverse the membrane as a helical segment. At 204–218 (RVRRSSQQWRRQPTR) the chain is on the cytoplasmic side. The helical transmembrane segment at 219–239 (LFVVVLASVLVFLICSLPLGF) threads the bilayer. The Extracellular segment spans residues 240–257 (YWFVLYWLNLPPDTKVLY). Residues 258–280 (FNLSRLSSSMSSSANPLIYFLVG) traverse the membrane as a helical segment. The Cytoplasmic portion of the chain corresponds to 281–320 (SRRSRRLQGSLGTVLQRALREEPELEGGETPTTGTNEMGA). Residues 301–320 (EEPELEGGETPTTGTNEMGA) form a disordered region. Residues 308–320 (GETPTTGTNEMGA) show a composition bias toward low complexity.

This sequence belongs to the G-protein coupled receptor 1 family. Mas subfamily. In terms of tissue distribution, co-expressed in the small diameter neurons with P2X3 and VR1 in dorsal root ganglia.

It is found in the cell membrane. May regulate nociceptor function and/or development, including the sensation or modulation of pain. Functions as a specific membrane receptor for beta-alanine. The receptor couples with G-protein G(q) and G(i). The protein is Mas-related G-protein coupled receptor member D (MRGPRD) of Macaca fascicularis (Crab-eating macaque).